The chain runs to 124 residues: UPF0102 protein tll1737 (124 aa).

Belongs to the UPF0102 family.

This chain is UPF0102 protein tll1737, found in Thermosynechococcus vestitus (strain NIES-2133 / IAM M-273 / BP-1).